The following is a 128-amino-acid chain: MGYFQGNDFRKITGGKKGKHRDKRKFELGSPPTETKLSTEELIEKERGMGGNIKIRVKYATFANIYDPQEKVSKKAKILSVIETPANKEYARRGIIVKGSIIQTELGKAKVTSRPGQDGTINAILIKE.

The tract at residues 1 to 37 (MGYFQGNDFRKITGGKKGKHRDKRKFELGSPPTETKL) is disordered. Residues 13 to 23 (TGGKKGKHRDK) show a composition bias toward basic residues.

Belongs to the eukaryotic ribosomal protein eS8 family. In terms of assembly, part of the 30S ribosomal subunit.

The sequence is that of Small ribosomal subunit protein eS8 from Sulfurisphaera tokodaii (strain DSM 16993 / JCM 10545 / NBRC 100140 / 7) (Sulfolobus tokodaii).